Here is a 351-residue protein sequence, read N- to C-terminus: Protein-glutamate methylesterase/protein-glutamine glutaminase (351 aa).

The 118-residue stretch at 3-120 folds into the Response regulatory domain; that stretch reads KTLVVDDSAL…EISKIENELV (118 aa). Aspartate 54 carries the 4-aspartylphosphate modification. The CheB-type methylesterase domain occupies 160–347; it reads ILIGSSTGGP…EQIVRMIEVK (188 aa). Catalysis depends on residues serine 165, histidine 192, and aspartate 289.

It belongs to the CheB family. Post-translationally, phosphorylated by CheA. Phosphorylation of the N-terminal regulatory domain activates the methylesterase activity.

The protein resides in the cytoplasm. The catalysed reaction is [protein]-L-glutamate 5-O-methyl ester + H2O = L-glutamyl-[protein] + methanol + H(+). It carries out the reaction L-glutaminyl-[protein] + H2O = L-glutamyl-[protein] + NH4(+). Functionally, involved in chemotaxis. Part of a chemotaxis signal transduction system that modulates chemotaxis in response to various stimuli. Catalyzes the demethylation of specific methylglutamate residues introduced into the chemoreceptors (methyl-accepting chemotaxis proteins or MCP) by CheR. Also mediates the irreversible deamidation of specific glutamine residues to glutamic acid. The polypeptide is Protein-glutamate methylesterase/protein-glutamine glutaminase (Methanococcoides burtonii (strain DSM 6242 / NBRC 107633 / OCM 468 / ACE-M)).